The chain runs to 392 residues: tRNA-specific 2-thiouridylase MnmA (392 aa).

ATP-binding positions include 18–25 (GMSGGVDS) and methionine 44. An interaction with target base in tRNA region spans residues 104-106 (NPD). Cysteine 109 serves as the catalytic Nucleophile. Cysteine 109 and cysteine 208 are oxidised to a cystine. Glycine 133 serves as a coordination point for ATP. Positions 158–160 (KDQ) are interaction with tRNA. The active-site Cysteine persulfide intermediate is cysteine 208. Residues 320 to 321 (RY) are interaction with tRNA.

It belongs to the MnmA/TRMU family.

It localises to the cytoplasm. The enzyme catalyses S-sulfanyl-L-cysteinyl-[protein] + uridine(34) in tRNA + AH2 + ATP = 2-thiouridine(34) in tRNA + L-cysteinyl-[protein] + A + AMP + diphosphate + H(+). Catalyzes the 2-thiolation of uridine at the wobble position (U34) of tRNA, leading to the formation of s(2)U34. This is tRNA-specific 2-thiouridylase MnmA from Marinobacter nauticus (strain ATCC 700491 / DSM 11845 / VT8) (Marinobacter aquaeolei).